The chain runs to 340 residues: Heat-inducible transcription repressor HrcA (340 aa).

The protein belongs to the HrcA family.

Functionally, negative regulator of class I heat shock genes (grpE-dnaK-dnaJ and groELS operons). Prevents heat-shock induction of these operons. This is Heat-inducible transcription repressor HrcA from Burkholderia ambifaria (strain MC40-6).